A 1216-amino-acid chain; its full sequence is ATP-dependent helicase/nuclease subunit A (1216 aa).

A UvrD-like helicase ATP-binding domain is found at 26 to 488 (QKKTAEQIEA…ILLKENFRSS (463 aa)). 47-54 (ASAGSGKT) contacts ATP. The UvrD-like helicase C-terminal domain maps to 515–802 (KHQLVFANTK…ELMTIHKSKG (288 aa)).

It belongs to the helicase family. AddA subfamily. As to quaternary structure, heterodimer of AddA and AddB/RexB. Requires Mg(2+) as cofactor.

It carries out the reaction Couples ATP hydrolysis with the unwinding of duplex DNA by translocating in the 3'-5' direction.. The enzyme catalyses ATP + H2O = ADP + phosphate + H(+). Functionally, the heterodimer acts as both an ATP-dependent DNA helicase and an ATP-dependent, dual-direction single-stranded exonuclease. Recognizes the chi site generating a DNA molecule suitable for the initiation of homologous recombination. The AddA nuclease domain is required for chi fragment generation; this subunit has the helicase and 3' -&gt; 5' nuclease activities. In Streptococcus pneumoniae (strain CGSP14), this protein is ATP-dependent helicase/nuclease subunit A.